The primary structure comprises 482 residues: BTB/POZ domain and ankyrin repeat-containing protein NOOT1 (482 aa).

The region spanning 25–107 (SDVVFSVEGR…LYSGQVSIVP (83 aa)) is the BTB domain. The C2HC NPR-type zinc-finger motif lies at 113-127 (RPNCGDRGCWHTHCT). Residues cysteine 116, cysteine 121, histidine 123, and cysteine 126 each contribute to the Zn(2+) site. 4 ANK repeats span residues 249-278 (QKIR…LNLD), 279-308 (EALA…DVNF), 313-342 (TGKT…DPNV), and 346-380 (DGVT…KLRL). A disordered region spans residues 395–434 (EEGNNNNSNNNNNATASSATNMYPHHNMNEDHHHSHNNNN). Residues 398–415 (NNNNSNNNNNATASSATN) show a composition bias toward low complexity.

It belongs to the plant 'ANKYRIN-BTB/POZ' family. 'NOOT-BOP-COCH-like' (NBCL) subfamily. Homodimer. Expressed in the shoot apical meristem (SAM) at the base of the developing leaf where stipules are formed. Associated with functional and vestigial abscission zones (AZs), including pulvini.

Its subcellular location is the nucleus. The protein resides in the cytoplasm. It localises to the cell membrane. The protein operates within protein modification; protein ubiquitination. Functionally, may act as a substrate-specific adapter of an E3 ubiquitin-protein ligase complex (CUL3-RBX1-BTB) which mediates the ubiquitination and subsequent proteasomal degradation of target proteins. Transcriptional co-regulator involved in the promotion of leaf and floral meristem fate and determinacy. Promotes normal stipule growth and development. Required for the abscission of senescent organs, probably by regulating the cell wall disorganization in abscission zones (AZs, e.g. pulvini at the base of leaves). Involved in the coordination of the symbiotic nodule developmental program. Promotes the formation of root nodules by interacting directly with APP1 to modulate the expression of the nuclear transcription factor Y subunit (NF-YA1), a key nodulin. Necessary for the robust maintenance of nodule identity throughout the nodule developmental program. Involved in the regulation of indeterminate nodule identity in association with NOOT2. The chain is BTB/POZ domain and ankyrin repeat-containing protein NOOT1 from Medicago truncatula (Barrel medic).